The following is a 340-amino-acid chain: Alcohol dehydrogenase patD (340 aa).

C46 is a binding site for Zn(2+). Residue H47 coordinates NAD(+). Zn(2+) contacts are provided by H67, E68, C101, C104, C112, and C154. H67 contributes to the substrate binding site. Residues G178–G183, V198–D203, K206, L265–I267, P289–G291, and E297–A299 each bind NAD(+).

Belongs to the zinc-containing alcohol dehydrogenase family. The cofactor is Zn(2+).

The protein resides in the cytoplasm. It localises to the cytosol. The catalysed reaction is neopatulin + NADPH + H(+) = (E)-ascladiol + NADP(+). It functions in the pathway mycotoxin biosynthesis; patulin biosynthesis. In terms of biological role, alcohol dehydrogenase; part of the gene cluster that mediates the biosynthesis of patulin, an acetate-derived tetraketide mycotoxin produced by several fungal species that shows antimicrobial properties against several bacteria. PatD catalyzes the conversion of neopatulin into E-ascladiol. The pathway begins with the synthesis of 6-methylsalicylic acid by the polyketide synthase (PKS) patK via condensation of acetate and malonate units. The 6-methylsalicylic acid decarboxylase patG then catalyzes the decarboxylation of 6-methylsalicylic acid to yield m-cresol (also known as 3-methylphenol). These first reactions occur in the cytosol. The intermediate m-cresol is then transported into the endoplasmic reticulum where the cytochrome P450 monooxygenase patH converts it to m-hydroxybenzyl alcohol, which is further converted to gentisyl alcohol by the cytochrome P450 monooxygenase patI. The oxidoreductases patJ and patO further convert gentisyl alcohol to isoepoxydon in the vacuole. PatN catalyzes then the transformation of isoepoxydon into phyllostine. The cluster protein patF is responsible for the conversion from phyllostine to neopatulin whereas the alcohol dehydrogenase patD converts neopatulin to E-ascladiol. The steps between isoepoxydon and E-ascladiol occur in the cytosol, and E-ascladiol is probably secreted to the extracellular space by one of the cluster-specific transporters patC or patM. Finally, the secreted patulin synthase patE catalyzes the conversion of E-ascladiol to patulin. The protein is Alcohol dehydrogenase patD of Penicillium expansum (Blue mold rot fungus).